Here is a 540-residue protein sequence, read N- to C-terminus: Probable H/ACA ribonucleoprotein complex subunit 4 (540 aa).

A disordered region spans residues 1–24 (MTTDKKSKSKSSEKSTQEVEQVIK). Residue D109 is the Nucleophile of the active site. A PUA domain is found at 280-355 (YKRIVVKDSA…VVATIKRVIM (76 aa)). Positions 414–540 (SPVESMNVDT…DKKEKKKSKN (127 aa)) are disordered. Residues 448–494 (KKEKKDKKEKKKDSSDDESEEEKSSKKDKKEKKEKKEKKEKKSSKDD) adopt a coiled-coil conformation. Over residues 473 to 489 (KKDKKEKKEKKEKKEKK) the composition is skewed to basic residues. 2 stretches are compositionally biased toward basic and acidic residues: residues 490–503 (SSKD…SKKE) and 513–528 (SDKD…DKKD). Over residues 529–540 (KKDKKEKKKSKN) the composition is skewed to basic residues.

This sequence belongs to the pseudouridine synthase TruB family. Component of the small nucleolar ribonucleoprotein particles containing H/ACA-type snoRNAs (H/ACA snoRNPs).

The protein resides in the nucleus. Its subcellular location is the nucleolus. It carries out the reaction a uridine in RNA = a pseudouridine in RNA. Plays a central role in ribosomal RNA processing. Probable catalytic subunit of H/ACA small nucleolar ribonucleoprotein (H/ACA snoRNP) complex, which catalyzes pseudouridylation of rRNA. This involves the isomerization of uridine such that the ribose is subsequently attached to C5, instead of the normal N1. Pseudouridine ('psi') residues may serve to stabilize the conformation of rRNAs. This chain is Probable H/ACA ribonucleoprotein complex subunit 4 (nola4), found in Dictyostelium discoideum (Social amoeba).